Here is a 567-residue protein sequence, read N- to C-terminus: Laccase-3 (567 aa).

An N-terminal signal peptide occupies residues 1–24 (MASSSSSRLLFLLSCSVLALLAGA). Plastocyanin-like domains lie at 32-148 (IVQE…PREN) and 158-310 (REVP…YDCG). N78 carries an N-linked (GlcNAc...) asparagine glycan. Residues H82, H84, H127, and H129 each coordinate Cu cation. N-linked (GlcNAc...) asparagine glycans are attached at residues N148, N187, N203, N298, N330, N379, and N389. The region spanning 415 to 551 (DFPAYPPVQF…AMAFLVEDGY (137 aa)) is the Plastocyanin-like 3 domain. Positions 468, 471, 473, 530, 531, 532, and 536 each coordinate Cu cation.

Belongs to the multicopper oxidase family. It depends on Cu cation as a cofactor.

It is found in the secreted. It localises to the extracellular space. The protein localises to the apoplast. The catalysed reaction is 4 hydroquinone + O2 = 4 benzosemiquinone + 2 H2O. Functionally, lignin degradation and detoxification of lignin-derived products. The chain is Laccase-3 (LAC3) from Oryza sativa subsp. japonica (Rice).